The sequence spans 634 residues: Probable threonine--tRNA ligase, cytoplasmic (634 aa).

Residues 1–61 (MSIYVTFKGQ…NENQKIELYD (61 aa)) form the TGS domain.

The protein belongs to the class-II aminoacyl-tRNA synthetase family.

It localises to the cytoplasm. It catalyses the reaction tRNA(Thr) + L-threonine + ATP = L-threonyl-tRNA(Thr) + AMP + diphosphate + H(+). This is Probable threonine--tRNA ligase, cytoplasmic from Enterocytozoon bieneusi (strain H348) (Microsporidian parasite).